A 237-amino-acid polypeptide reads, in one-letter code: Large ribosomal subunit protein uL1 (237 aa).

This sequence belongs to the universal ribosomal protein uL1 family. As to quaternary structure, part of the 50S ribosomal subunit.

Functionally, binds directly to 23S rRNA. The L1 stalk is quite mobile in the ribosome, and is involved in E site tRNA release. Its function is as follows. Protein L1 is also a translational repressor protein, it controls the translation of the L11 operon by binding to its mRNA. The protein is Large ribosomal subunit protein uL1 of Rickettsia typhi (strain ATCC VR-144 / Wilmington).